A 100-amino-acid polypeptide reads, in one-letter code: Defensin-6 (100 aa).

Positions 1–19 (MRTLTILTAVLLVALQAKA) are cleaved as a signal peptide. The propeptide occupies 20–68 (EPLQAEDEPLQAKAYEADAQEQRGANDQDFAVSFAEDASSSLRALGSTR). Intrachain disulfides connect C72-C99, C74-C88, and C78-C98.

It belongs to the alpha-defensin family. As to quaternary structure, homodimer. Self-assembles into higher-order oligomers termed nanonets, fibril-like structures that entrap microbes. Self-assembly into nanonets seems to protect against proteolytic digestion in duodenal fluid. Interacts with Y.enterocolitica invasin and S.typhimurium fliC/flagellim; the interaction creates an anchoring site for progressive DEFA6 self-assembly into nanonets. Post-translationally, proteolytically cleaved by trypsin at Arg-68; the propeptide is stored in the tissue of the small intestine and the mature peptide is found in the luminal fluid; cleavage may occur during or after release into the lumen. The N-terminal propeptide region suppresses self-assembly and renders DEFA6 propeptide unable to agglutinate bacteria and protect human epithelial cells from bacterial invasion. Under reducing conditions, naturally present in the gut owing to the low redox potential or enzymatically generated by the thioredoxin system, the disulfide bridges are opened leading to a conformational change of DEF6, thereby changing its antimicrobial spectrum. The reduced form exhibits inhibitory activity against anaerobic bacteria, in contrast to the minimal antimicrobial activity of the disulfide-linked oxidized form. The formation of higher-order nanonets and bacterial entrapment is independent of the redox state.

It localises to the secreted. Its subcellular location is the cytoplasmic vesicle. The protein localises to the secretory vesicle. Host-defense peptide that contributes to intestinal innate immunity and mediates homeostasis at mucosal surfaces by forming higher-order oligomers that capture bacteria and prevent microbial invasion of the epithelium. After binding to bacterial surface proteins, undergoes ordered self-assembly to form fibril-like nanonets that surround and entangle bacteria and thereby prevent bacterial invasion across the epithelial barrier. Entangles and agglutinates Gram-negative bacteria, such as E.coli, S.typhimurium and Y.enterocolitica, and Gram-positive bacteria such as L.monocytogenes, thereby protecting the intestine against invasion by enteric bacterial pathogens. Blocks adhesion of C.albicans to intestinal epithelial cells and thereby suppresses fungal invasion of epithelial cells and biofilm formation. Under reducing conditions and in an acidic environment similar to the intestinal milieu, exhibits inhibitory activity against anaerobic bacteria such as B.adolescentis, L.acidophilus, and B.breve, as well as B.longum and S.thermophilus, possibly by leading to alterations in bacterial cell envelope structures. The disulfide-linked oxidized form exhibits negligible antimicrobial activity against Gram-negative and Gram-positive bacteria, as compared to the enteric defensin DEFA5. The protein is Defensin-6 (DEFA6) of Pan troglodytes (Chimpanzee).